The primary structure comprises 199 residues: Thymidylate kinase (199 aa).

7-14 (GTEGVGKT) serves as a coordination point for ATP.

The protein belongs to the thymidylate kinase family.

It catalyses the reaction dTMP + ATP = dTDP + ADP. Functionally, phosphorylation of dTMP to form dTDP in both de novo and salvage pathways of dTTP synthesis. The protein is Thymidylate kinase of Acinetobacter baumannii (strain AB307-0294).